We begin with the raw amino-acid sequence, 310 residues long: Isoaspartyl peptidase/L-asparaginase (310 aa).

Threonine 167 serves as the catalytic Nucleophile. Residues 195–198 (RVGD) and 218–221 (TGHG) contribute to the substrate site.

Belongs to the Ntn-hydrolase family. Heterodimer of an alpha and beta chain produced by autocleavage. In terms of processing, cleaved into an alpha and beta chain by autocatalysis; this activates the enzyme. The N-terminal residue of the beta subunit is responsible for the nucleophile hydrolase activity.

The protein localises to the cytoplasm. The enzyme catalyses L-asparagine + H2O = L-aspartate + NH4(+). The catalysed reaction is Cleavage of a beta-linked Asp residue from the N-terminus of a polypeptide.. Functionally, has both L-asparaginase and beta-aspartyl peptidase activity. Does not have aspartylglucosaminidase activity and is inactive toward GlcNAc-L-Asn. Likewise, has no activity toward glutamine. This is Isoaspartyl peptidase/L-asparaginase (asrgl1) from Danio rerio (Zebrafish).